The sequence spans 701 residues: Transcriptional regulator Kaiso (701 aa).

In terms of domain architecture, BTB spans 32 to 94 (CDVTVIVEDR…IYSSKIVRVR (63 aa)). Disordered regions lie at residues 128 to 158 (GAGG…SPLP) and 181 to 311 (SSDD…QNQH). Positions 245-258 (TPSSQVQLTQNSLP) are enriched in polar residues. A compositionally biased stretch (low complexity) spans 259–273 (TNQQSSKNTSSTTQK). Residues 278–311 (VNANISKNPTPAANGFLSPTAQKQGTPNAVQNQH) are compositionally biased toward polar residues. Residues 470 to 609 (AKLDLDGLPN…QIRQYAYVNN (140 aa)) are required for methylation dependent DNA-binding. 3 C2H2-type zinc fingers span residues 501 to 523 (YICI…FNVH), 529 to 551 (YPCR…EIHH), and 557 to 580 (YQCL…RSVH). Residues 519–701 (HFNVHSWEKK…EFEFVIPESY (183 aa)) are required for sequence specific DNA-binding. The segment at 644 to 664 (DIDPDEPQQPASEGNHANSAT) is disordered. The segment covering 652-664 (QPASEGNHANSAT) has biased composition (polar residues).

As to quaternary structure, self associates. Interacts with tcf7l1-A, leading to repression of tcf7l1-A target genes. Interacts with ctnnd1, and this interaction may inhibit DNA-binding. Interacts with ncor1.

It is found in the nucleus. Transcriptional regulator with bimodal DNA-binding specificity. Binds to methylated CpG dinucleotides in the consensus sequence 5'-CGCG-3' and also binds to the non-methylated consensus sequence 5'-CTGCNA-3'. May recruit the N-CoR repressor complex to promote histone deacetylation and the formation of repressive chromatin structures in target gene promoters. Contributes to the repression of target genes of the Wnt signaling pathway and to the methylation-dependent repression of zygotic transcription prior to the mid-blastula transition (MBT). Also required for gastrulation movements. The protein is Transcriptional regulator Kaiso (zbtb33) of Xenopus laevis (African clawed frog).